We begin with the raw amino-acid sequence, 634 residues long: Chaperone protein HtpG (634 aa).

The segment at 1–342 is a; substrate-binding; that stretch reads MSVETQKETL…SNDLSLNVSR (342 aa). A b region spans residues 343–559; that stretch reads EILQKDPVID…EQDLGLQMRQ (217 aa). Residues 560-634 form a c region; that stretch reads ILEASGQKVP…LNKLLVELSA (75 aa).

This sequence belongs to the heat shock protein 90 family. In terms of assembly, homodimer.

The protein resides in the cytoplasm. Its function is as follows. Molecular chaperone. Has ATPase activity. The chain is Chaperone protein HtpG from Pseudomonas aeruginosa (strain ATCC 15692 / DSM 22644 / CIP 104116 / JCM 14847 / LMG 12228 / 1C / PRS 101 / PAO1).